A 155-amino-acid chain; its full sequence is MRKNAAPKRPVVKDPVYNSEQVTMLVNKILRDGKKSTAERIVYGALEVCREKTGTDPVGTLEKALGNIRPDLEVRSRRVGGATYQVPVEVKPARSNTLALRWLVTFTRQRRENSMIERLANEILDASNGLGASVKRREDTHKMAEANRAFAHYRW.

It belongs to the universal ribosomal protein uS7 family. As to quaternary structure, part of the 30S ribosomal subunit. Contacts proteins S9 and S11.

Functionally, one of the primary rRNA binding proteins, it binds directly to 16S rRNA where it nucleates assembly of the head domain of the 30S subunit. Is located at the subunit interface close to the decoding center, probably blocks exit of the E-site tRNA. In Corynebacterium aurimucosum (strain ATCC 700975 / DSM 44827 / CIP 107346 / CN-1) (Corynebacterium nigricans), this protein is Small ribosomal subunit protein uS7.